The primary structure comprises 529 residues: uncharacterized protein (529 aa).

The active-site Nucleophile is Asp389. Glu392 is a catalytic residue. Catalysis depends on Asp459, which acts as the Proton donor.

This sequence belongs to the glycosyl hydrolase 31 family.

This is an uncharacterized protein from Pseudescherichia vulneris (Escherichia vulneris).